The following is a 164-amino-acid chain: ATP synthase subunit b (164 aa).

Residues 6–26 (GELVGNFILVTGSVIVLLLLI) form a helical membrane-spanning segment.

Belongs to the ATPase B chain family. F-type ATPases have 2 components, F(1) - the catalytic core - and F(0) - the membrane proton channel. F(1) has five subunits: alpha(3), beta(3), gamma(1), delta(1), epsilon(1). F(0) has three main subunits: a(1), b(2) and c(10-14). The alpha and beta chains form an alternating ring which encloses part of the gamma chain. F(1) is attached to F(0) by a central stalk formed by the gamma and epsilon chains, while a peripheral stalk is formed by the delta and b chains.

The protein resides in the cell membrane. In terms of biological role, f(1)F(0) ATP synthase produces ATP from ADP in the presence of a proton or sodium gradient. F-type ATPases consist of two structural domains, F(1) containing the extramembraneous catalytic core and F(0) containing the membrane proton channel, linked together by a central stalk and a peripheral stalk. During catalysis, ATP synthesis in the catalytic domain of F(1) is coupled via a rotary mechanism of the central stalk subunits to proton translocation. Its function is as follows. Component of the F(0) channel, it forms part of the peripheral stalk, linking F(1) to F(0). This Streptococcus pyogenes serotype M1 protein is ATP synthase subunit b.